We begin with the raw amino-acid sequence, 32 residues long: Trypsin inhibitor 4 (32 aa).

3 cysteine pairs are disulfide-bonded: Cys6–Cys23, Cys13–Cys25, and Cys19–Cys31.

Belongs to the protease inhibitor I7 (squash-type serine protease inhibitor) family.

The protein localises to the secreted. Inhibits trypsin. The chain is Trypsin inhibitor 4 from Cucurbita maxima (Pumpkin).